A 772-amino-acid polypeptide reads, in one-letter code: Rho guanine nucleotide exchange factor 6 (772 aa).

In terms of domain architecture, Calponin-homology (CH) spans 1–111 (MNPEERVVTW…TLLAVNKATE (111 aa)). The segment at 115–158 (SERPCGRSSSLSATTSSQTNPQAAVPSTTPEQQSEEKAAEMTEN) is disordered. Residues 122–133 (SSSLSATTSSQT) are compositionally biased toward low complexity. Ser-126 carries the post-translational modification Phosphoserine. Thr-133 carries the phosphothreonine modification. Over residues 134-146 (NPQAAVPSTTPEQ) the composition is skewed to polar residues. The SH3 domain occupies 160–219 (SHQLIVKARFNFKQTNEDELSVCKGDIIYVTRVEEGGWWEGTLNGRTGWFPSNYVREIKP). Position 225 is a phosphoserine (Ser-225). A DH domain is found at 241–421 (YYTVVLQNIL…KSLMGQCQDL (181 aa)). Residues 443-548 (DIKTLGNVIF…WMEQLNRLTK (106 aa)) form the PH domain. A Phosphoserine modification is found at Ser-488. Positions 557-573 (SKTSSSSCSTHSSFSST) are enriched in low complexity. Positions 557–581 (SKTSSSSCSTHSSFSSTGQPRGPLE) are disordered. Ser-640 and Ser-680 each carry phosphoserine.

Interacts with PAK kinases through the SH3 domain. Interacts with GIT1. Interacts with PARVB. Component of cytoplasmic complexes, which also contain PXN, GIT1 and PAK1. Interacts with BIN2. Identified in a complex with BIN2 and GIT2. Interacts with PARVG; the guanine nucleotide exchange factor activity of ARHGEF6 is essential for PARVG-induced enhancement of cell spreading.

It is found in the cell projection. Its subcellular location is the lamellipodium. In terms of biological role, acts as a RAC1 guanine nucleotide exchange factor (GEF). This is Rho guanine nucleotide exchange factor 6 (Arhgef6) from Rattus norvegicus (Rat).